The following is a 1070-amino-acid chain: Protocadherin-8 (1070 aa).

Residues 1–29 (MSPAKRWGSPCLFPLQLFSLCWVLSVAQS) form the signal peptide. Cadherin domains lie at 30-135 (KTVR…APRF), 136-245 (PRAQ…SPAF), 247-354 (QGAV…APEI), 393-497 (QEAG…APIF), 498-609 (TKPV…SPIL), and 615-721 (ANGS…VPAS). Topologically, residues 30–747 (KTVRYSTFEE…SGPSLQWDTP (718 aa)) are extracellular. Asn616 is a glycosylation site (N-linked (GlcNAc...) asparagine). Positions 716 to 725 (SAVPASSGSP) are enriched in low complexity. The segment at 716-740 (SAVPASSGSPEHSRPPGSRLAPSGP) is disordered. A helical membrane pass occupies residues 748-768 (LIVIIVLAGSCTLLLAAIIAI). Topologically, residues 769–1070 (ATTCNRRKKE…SPKKGINENV (302 aa)) are cytoplasmic. 3 disordered regions span residues 777–859 (KEVR…TGES), 906–928 (REAE…DSDS), and 1046–1070 (IGVP…NENV). 2 stretches are compositionally biased toward basic and acidic residues: residues 780–790 (RKGGALREERP) and 906–921 (REAE…KGDS). Ser1053 bears the Phosphoserine mark.

In terms of assembly, the N-terminal extracellular domain forms homophilic interactions; these interactions activate p38 MAPK via TAOK2 and trigger endocytosis. Interacts with CDH2; this interaction may lead to CDH2 cointernalization. Interacts with CDH11. Interacts with TAOK2.

Its subcellular location is the cell membrane. The protein resides in the cell projection. The protein localises to the dendrite. It localises to the presynaptic cell membrane. It is found in the postsynaptic cell membrane. Calcium-dependent cell-adhesion protein. May play a role in activity-induced synaptic reorganization underlying long term memory. Could be involved in CDH2 internalization through TAOK2/p38 MAPK pathway. In hippocampal neurons, may play a role in the down-regulation of dendritic spines, maybe through its action on CDH2 endocytosis. This chain is Protocadherin-8 (Pcdh8), found in Mus musculus (Mouse).